Consider the following 64-residue polypeptide: Large ribosomal subunit protein bL33 (64 aa).

Residues 19-40 are disordered; it reads TSTDPKRSNGVSRYTTEKNRRN.

It belongs to the bacterial ribosomal protein bL33 family.

The polypeptide is Large ribosomal subunit protein bL33 (Prochlorococcus marinus (strain MIT 9215)).